The following is a 145-amino-acid chain: Mediator of RNA polymerase II transcription subunit 21 (145 aa).

A coiled-coil region spans residues 79–112 (EESTAALQAASLRQLEEENQEAAARLEEVVYRGD).

The protein belongs to the Mediator complex subunit 21 family. As to quaternary structure, component of the Mediator complex.

The protein resides in the nucleus. Component of the Mediator complex, a coactivator involved in the regulated transcription of nearly all RNA polymerase II-dependent genes. Mediator functions as a bridge to convey information from gene-specific regulatory proteins to the basal RNA polymerase II transcription machinery. Mediator is recruited to promoters by direct interactions with regulatory proteins and serves as a scaffold for the assembly of a functional preinitiation complex with RNA polymerase II and the general transcription factors. This chain is Mediator of RNA polymerase II transcription subunit 21 (med21), found in Danio rerio (Zebrafish).